The primary structure comprises 481 residues: MSIQVHDTLTAQKRELVPLEPGKLRLYVCGPTVYDYSHLGHARCYVVWDVVVRHLRARGLEVRFVRNFTDVDDKIIQRANERGEDPIALASRFADAFHEDMDALGNLRPDVEPRVSGHIPEIVALIARLVERGFAYAPGNGDVYYAVRKFPEYGRLSKRNLDDLIAGARVEPGEAKRDPLDFALWKAAKPGEPAWESPWGKGRPGWHIECSAMTQKHLGAPIDLHAGGKDLVFPHHTNEIAQSVAATSDGLHAEDFARYWMHNGFVQIDDEKMSKSLGNFFTIRDVLARFDGEALRFFLLGTHYRRDFNFSDQVLAEAERRLSALYETVEKAERLGAGAAPAAEPAFVERARAALDDDFNTPQVLGIVAEAFTEANALADRKGKKSPEEKARLAAFARGARAVGAVLGILDRPPAQALSAIRDRAAARRGIDGGEVERSIAERAAARAAKDFARSDAIRDALLARGVVLMDGPQGTTWKVE.

C29 is a binding site for Zn(2+). Positions 31-41 match the 'HIGH' region motif; it reads PTVYDYSHLGH. The Zn(2+) site is built by C210, H235, and E239. The 'KMSKS' region motif lies at 272-276; that stretch reads KMSKS. Residue K275 coordinates ATP.

This sequence belongs to the class-I aminoacyl-tRNA synthetase family. As to quaternary structure, monomer. It depends on Zn(2+) as a cofactor.

It localises to the cytoplasm. The enzyme catalyses tRNA(Cys) + L-cysteine + ATP = L-cysteinyl-tRNA(Cys) + AMP + diphosphate. In Anaeromyxobacter sp. (strain K), this protein is Cysteine--tRNA ligase.